A 148-amino-acid polypeptide reads, in one-letter code: MSVEIESIEHELEESIASLRQAGVRITPQRQAILRYLISSHTHPTADEIYQALSPDFPNISVATIYNNLRVFKDIGIVKELTYGDSSSRFDFNTHNHYHIICEQCGKIVDFQYPQLNEIERLAQHMTDFDVTHHRMEIYGVCKECQDK.

A DNA-binding region spans residues 1-84 (MSVEIESIEH…IGIVKELTYG (84 aa)). Residues Cys-102, Cys-105, Cys-142, and Cys-145 each contribute to the Zn(2+) site.

It belongs to the Fur family.

The protein localises to the cytoplasm. Manganese-dependent repressor that controls a regulon of oxidative stress resistance and iron-storage proteins. May act as a hydrogen peroxide and organic hydroperoxide sensor. This Staphylococcus aureus (strain MW2) protein is Peroxide-responsive repressor PerR (perR).